Here is a 342-residue protein sequence, read N- to C-terminus: Phosphoribosylformylglycinamidine cyclo-ligase (342 aa).

Belongs to the AIR synthase family.

It is found in the cytoplasm. The enzyme catalyses 2-formamido-N(1)-(5-O-phospho-beta-D-ribosyl)acetamidine + ATP = 5-amino-1-(5-phospho-beta-D-ribosyl)imidazole + ADP + phosphate + H(+). The protein operates within purine metabolism; IMP biosynthesis via de novo pathway; 5-amino-1-(5-phospho-D-ribosyl)imidazole from N(2)-formyl-N(1)-(5-phospho-D-ribosyl)glycinamide: step 2/2. The polypeptide is Phosphoribosylformylglycinamidine cyclo-ligase (Staphylococcus saprophyticus subsp. saprophyticus (strain ATCC 15305 / DSM 20229 / NCIMB 8711 / NCTC 7292 / S-41)).